The sequence spans 291 residues: Flap endonuclease (291 aa).

Positions 82–116 are helical arch; the sequence is YKGNRDEKYAQRTEEEKALDEQFFEYLKDAFELCK. K83 is a DNA binding site. Mg(2+)-binding residues include D130, D153, D155, and D201. The interval 188 to 224 is DNA-binding; H3TH; that stretch reads DVEQFISLKAIMGDLGDNIRGVEGIGAKRGYNIIREF. Positions 190 to 263 constitute a 5'-3' exonuclease domain; sequence EQFISLKAIM…FRNLILVDLP (74 aa). 2 residues coordinate K(+): V209 and I212.

Mg(2+) is required as a cofactor. K(+) serves as cofactor.

The catalysed reaction is Exonucleolytic cleavage in the 5'- to 3'-direction to yield nucleoside 5'-phosphates.. With respect to regulation, inhibited by p-hydroxymercuribenzoate (PHMB). In terms of biological role, catalyzes both the 5'-exonucleolytic and structure-specific endonucleolytic hydrolysis of DNA branched nucleic acid molecules and probably plays a role in viral genome replication. Active on flap (branched duplex DNA containing a free single-stranded 5'-end), 5'overhangs and pseudo-Y structures. The substrates require a free, single-stranded 5' end, with endonucleolytic hydrolysis occurring at the junction of double- and single-stranded DNA. This function may be used for example to trim such branched molecules generated by Okazaki fragments synthesis during replication. This is Flap endonuclease (D15) from Escherichia phage T5 (Enterobacteria phage T5).